The chain runs to 466 residues: Ribulose bisphosphate carboxylase large chain (466 aa).

At Lys5 the chain carries N6,N6,N6-trimethyllysine. Substrate is bound by residues Asn114 and Thr164. Lys166 serves as the catalytic Proton acceptor. Substrate is bound at residue Lys168. Mg(2+) contacts are provided by Lys192, Asp194, and Glu195. Residue Lys192 is modified to N6-carboxylysine. The Proton acceptor role is filled by His285. Residues Arg286, His318, and Ser370 each coordinate substrate.

Belongs to the RuBisCO large chain family. Type I subfamily. Heterohexadecamer of 8 large chains and 8 small chains; disulfide-linked. The disulfide link is formed within the large subunit homodimers. Requires Mg(2+) as cofactor. In terms of processing, the disulfide bond which can form in the large chain dimeric partners within the hexadecamer appears to be associated with oxidative stress and protein turnover.

Its subcellular location is the plastid. It localises to the chloroplast. The enzyme catalyses 2 (2R)-3-phosphoglycerate + 2 H(+) = D-ribulose 1,5-bisphosphate + CO2 + H2O. It catalyses the reaction D-ribulose 1,5-bisphosphate + O2 = 2-phosphoglycolate + (2R)-3-phosphoglycerate + 2 H(+). RuBisCO catalyzes two reactions: the carboxylation of D-ribulose 1,5-bisphosphate, the primary event in carbon dioxide fixation, as well as the oxidative fragmentation of the pentose substrate in the photorespiration process. Both reactions occur simultaneously and in competition at the same active site. The protein is Ribulose bisphosphate carboxylase large chain of Cucurbita pepo (Vegetable marrow).